Consider the following 780-residue polypeptide: Pendrin (780 aa).

Topologically, residues 1 to 87 (MAARDRRSEP…YRVKEWLLSD (87 aa)) are cytoplasmic. A helical membrane pass occupies residues 88-108 (IISGVSTGLVGTLQGMAYALL). Residue Ala-109 is a topological domain, extracellular. A helical membrane pass occupies residues 110 to 130 (AVPVQYGLYSAFFPILTYFVF). Topologically, residues 131–135 (GTSRH) are cytoplasmic. The helical transmembrane segment at 136–156 (ISVGPFPVVSLMVGSVVLSMA) threads the bilayer. The Extracellular segment spans residues 157–191 (PDDHFLVPSGNGSTLNTTTLDTGTRDAARVLLAST). The helical transmembrane segment at 192 to 212 (LTLLVGIIQLVFGGLQIGFIV) threads the bilayer. The Cytoplasmic segment spans residues 213–218 (RYLADP). A helical membrane pass occupies residues 219-239 (LVGGFTTAAAFQVLVSQLKIV). The Extracellular segment spans residues 240 to 263 (LNVSTKNYNGVLSIIYTLIEIFQN). The chain crosses the membrane as a helical span at residues 264–284 (IGDTNIADFIAGLLTIIVCMA). Topologically, residues 285-295 (VKELNDRFKHK) are cytoplasmic. A helical transmembrane segment spans residues 296–316 (IPVPIPIEVIVTIIATAISYG). At 317 to 344 (ANLEANYNAGIVKSIPSGFLPPVLPSVG) the chain is on the extracellular side. The chain crosses the membrane as a helical span at residues 345-365 (LFSDMLAASFSIAVVAYAIAV). The Cytoplasmic segment spans residues 366–384 (SVGKVYATKHDYIIDGNQE). The chain crosses the membrane as a helical span at residues 385–405 (FIAFGISNVFSGFFSCFVATT). Residues 406–421 (ALSRTAVQESTGGKTQ) lie on the Extracellular side of the membrane. Residues 422–442 (VAGLISAVIVMVAIVALGKLL) traverse the membrane as a helical segment. The Cytoplasmic portion of the chain corresponds to 443-448 (EPLQKS). A helical transmembrane segment spans residues 449 to 469 (VLAAVVIANLKGMFMQVCDVP). Topologically, residues 470–486 (RLWKQNKTDAVIWVFTC) are extracellular. The helical transmembrane segment at 487 to 507 (IMSIILGLDLGLLAGLLFGLL) threads the bilayer. Residues 508–780 (TVVLRVQFPS…QDEAMRRLAS (273 aa)) lie on the Cytoplasmic side of the membrane. The STAS domain maps to 535 to 729 (HYKNLEEPEG…LTVHDAILYL (195 aa)).

It belongs to the SLC26A/SulP transporter (TC 2.A.53) family. As to expression, highly expressed in the kidney (at protein level).

Its subcellular location is the cell membrane. It localises to the apical cell membrane. It carries out the reaction chloride(in) = chloride(out). It catalyses the reaction iodide(out) = iodide(in). The enzyme catalyses hydrogencarbonate(in) + chloride(out) = hydrogencarbonate(out) + chloride(in). The catalysed reaction is iodide(in) + hydrogencarbonate(out) = iodide(out) + hydrogencarbonate(in). It carries out the reaction iodide(in) + chloride(out) = iodide(out) + chloride(in). It catalyses the reaction formate(in) + chloride(out) = formate(out) + chloride(in). In terms of biological role, sodium-independent transporter of chloride and iodide. Mediates electroneutral chloride-bicarbonate and chloride-formate exchange with 1:1 stoichiometry. Mediates electroneutral iodide-chloride and iodide-bicarbonate exchange. The protein is Pendrin (Slc26a4) of Rattus norvegicus (Rat).